A 742-amino-acid chain; its full sequence is Transcription factor FFUJ_09177 (742 aa).

Positions 15–41 (CVSCARSKQRCDGHSPCGRCSLKNLDC) form a DNA-binding region, zn(2)-C6 fungal-type. 2 disordered regions span residues 50 to 80 (GQNS…VQSQ) and 218 to 244 (HSLD…SVRD). Positions 218-240 (HSLDISSYQGQSNQTSPETTSHS) are enriched in polar residues.

It localises to the nucleus. Its function is as follows. Transcription factor; part of the DMATS1 gene cluster that mediates the biosynthesis of a reversely N-prenylated monomeric L-tryptophan (r-N-DMAT). Seems not to regulate the expression of the DMATS1 cluster. The chain is Transcription factor FFUJ_09177 from Gibberella fujikuroi (strain CBS 195.34 / IMI 58289 / NRRL A-6831) (Bakanae and foot rot disease fungus).